The sequence spans 167 residues: Photosystem I assembly protein Ycf3 (167 aa).

TPR repeat units lie at residues 35 to 68 (AFTY…EIDP), 72 to 105 (SYIL…NPSL), and 120 to 153 (GEQA…APGN).

Belongs to the Ycf3 family.

The protein localises to the plastid. It localises to the chloroplast thylakoid membrane. Essential for the assembly of the photosystem I (PSI) complex. May act as a chaperone-like factor to guide the assembly of the PSI subunits. The protein is Photosystem I assembly protein Ycf3 of Chara vulgaris (Common stonewort).